A 577-amino-acid polypeptide reads, in one-letter code: Pentatricopeptide repeat-containing protein At1g63400 (577 aa).

15 PPR repeats span residues 49-83, 84-118, 119-153, 154-188, 189-223, 224-258, 259-293, 294-328, 329-363, 364-398, 399-433, 434-468, 469-503, 504-538, and 539-573; these read GSGD…RPLP, SIFE…GISH, NLYT…GYEP, SIVT…GYRP, DTIT…GCQP, NLVT…KIEA, NVVI…GVRP, NVIT…KINP, NVVT…SIDP, DIFT…DCFP, NVVT…GLVG, NTVT…GVHP, NIMT…KMEP, TIYT…GVKP, and DVII…GPLP.

The protein belongs to the PPR family. P subfamily.

The polypeptide is Pentatricopeptide repeat-containing protein At1g63400 (Arabidopsis thaliana (Mouse-ear cress)).